Consider the following 87-residue polypeptide: U3-theraphotoxin-Hhn1h (87 aa).

An N-terminal signal peptide occupies residues 1 to 24 (MVNMKASMFLTFAGLVLLFVVCYA). A propeptide spanning residues 25 to 52 (SESEEKEFPKEMLSSIFAVDNDSKQEER) is cleaved from the precursor. 3 disulfide bridges follow: Cys-54/Cys-67, Cys-61/Cys-72, and Cys-66/Cys-79.

This sequence belongs to the neurotoxin 10 (Hwtx-1) family. 51 (Hntx-8) subfamily. Hntx-8 sub-subfamily. Expressed by the venom gland.

Its subcellular location is the secreted. Functionally, ion channel inhibitor. This is U3-theraphotoxin-Hhn1h from Cyriopagopus hainanus (Chinese bird spider).